The following is a 185-amino-acid chain: Lysine-rich arabinogalactan protein 17 (185 aa).

An N-terminal signal peptide occupies residues 1-21 (MTRNILLTVTLICIVFITVGG). The tract at residues 25-160 (ATAPIHSPST…FSPAADDQSG (136 aa)) is disordered. Residues 43 to 68 (SPAISPAAPTPESTEAPAKTPVEAPV) are compositionally biased toward low complexity. Pro residues predominate over residues 69–88 (EAPPSPTPASTPQISPPAPS). The segment covering 111-122 (TKHKKKTKKHKT) has biased composition (basic residues). Pro residues predominate over residues 135 to 146 (PPAPPGEAPGPG). Serine 159 carries the GPI-anchor amidated serine lipid modification. A propeptide spans 160 to 185 (GAQRISVVIQMVGAAAIAWSLLVLAF) (removed in mature form).

It belongs to the lysine-rich AGP family. In terms of processing, O-glycosylated on the hydroxyproline residues. Predominantly expressed in open flowers. Also expressed in leaves and stems, and at a lower level in roots.

It localises to the cell membrane. Functionally, proteoglycan that seems to be implicated in diverse developmental roles such as differentiation, cell-cell recognition, embryogenesis and programmed cell death. This Arabidopsis thaliana (Mouse-ear cress) protein is Lysine-rich arabinogalactan protein 17 (AGP17).